Reading from the N-terminus, the 300-residue chain is U1 small nuclear ribonucleoprotein 70 kDa homolog (300 aa).

Positions 107–198 (RTIFIGRLPY…RTVKYFKPRR (92 aa)) constitute an RRM domain. Disordered regions lie at residues 204–248 (GGRG…AYSA) and 263–300 (NRPLLSAATPTAAVTSVYKSRNSRTRESQPAPKEAPDY). Positions 265-279 (PLLSAATPTAAVTSV) are enriched in low complexity.

In terms of assembly, component of the spliceosome, where it is associated with snRNP U1. Binds stem loop I of U1 snRNA. Interacts with mRNA.

The protein resides in the nucleus. In terms of biological role, involved in nuclear mRNA splicing. The polypeptide is U1 small nuclear ribonucleoprotein 70 kDa homolog (SNP1) (Saccharomyces cerevisiae (strain ATCC 204508 / S288c) (Baker's yeast)).